The sequence spans 927 residues: Protein unc-45 homolog B (927 aa).

TPR repeat units lie at residues 4 to 37 (PVQLKEEGNKYFQSNDYGNAIECYSKALKLITDK), 41 to 74 (AVLYRNRSACYLKQENYIQAAADASKAIDVDASD), and 76 to 108 (KALFRRCQALEKLGKLDQAYKDVQRCATLEPKN). 3 ARM repeats span residues 167–206 (DAGAERIFQNNGVNLLMQLIETKDPELILSAVRTLSGMCT), 209–248 (RARATAIVHLVGINKICSIMAVDHEEIALAACNLLQNIVD), and 746–785 (DKLRQKIVKEKALPEIENYMFENHEQIRQAATECMCNLAV).

The protein localises to the cytoplasm. Its subcellular location is the myofibril. The protein resides in the sarcomere. It localises to the z line. It is found in the a band. The protein localises to the perinuclear region. Its subcellular location is the cytosol. Acts as a co-chaperone for HSP90 and is required for proper folding of the myosin motor domain. Plays a role in sarcomere formation during muscle cell assembly. Is necessary for normal early lens development. The polypeptide is Protein unc-45 homolog B (Xenopus laevis (African clawed frog)).